A 91-amino-acid polypeptide reads, in one-letter code: Uteroglobin (91 aa).

The N-terminal stretch at 1–21 is a signal peptide; it reads MKLAVTLTLVTLALCCSSASA.

The protein belongs to the secretoglobin family. Antiparallel homodimer; disulfide-linked. Interaction with LMBR1L has been observed in PubMed:16423471, but not in PubMed:23964685. As to expression, club cells (nonciliated cells of the surface epithelium of the pulmonary airways).

It is found in the secreted. Its function is as follows. Binds phosphatidylcholine, phosphatidylinositol, polychlorinated biphenyls (PCB) and weakly progesterone, potent inhibitor of phospholipase A2. The sequence is that of Uteroglobin (SCGB1A1) from Homo sapiens (Human).